We begin with the raw amino-acid sequence, 401 residues long: Homeobox protein engrailed-1 (401 aa).

4 disordered regions span residues M1–Q102, G138–G167, S229–P253, and R293–P315. Low complexity predominate over residues D13–V48. 2 stretches are compositionally biased toward pro residues: residues S49–P64 and P73–Q88. Positions H89–Q102 are enriched in low complexity. Composition is skewed to gly residues over residues G138–S147 and S234–G243. Positions D312–T371 form a DNA-binding region, homeobox.

It belongs to the engrailed homeobox family.

The protein resides in the nucleus. Required for proper formation of the apical ectodermal ridge and correct dorsal-ventral patterning in the limb. The chain is Homeobox protein engrailed-1 (En1) from Mus musculus (Mouse).